We begin with the raw amino-acid sequence, 126 residues long: Protein FMP49, mitochondrial (126 aa).

Its subcellular location is the mitochondrion. This is Protein FMP49, mitochondrial from Saccharomyces cerevisiae (strain ATCC 204508 / S288c) (Baker's yeast).